A 376-amino-acid polypeptide reads, in one-letter code: Deoxyguanosinetriphosphate triphosphohydrolase-like protein (376 aa).

The HD domain occupies 62 to 198 (RLTHSLEVSA…AALADDISYI (137 aa)).

It belongs to the dGTPase family. Type 2 subfamily.

The chain is Deoxyguanosinetriphosphate triphosphohydrolase-like protein from Rickettsia canadensis (strain McKiel).